We begin with the raw amino-acid sequence, 283 residues long: Protein/nucleic acid deglycase HchA (283 aa).

The Zn(2+) site is built by His-86, Glu-91, and His-123. Cys-185 functions as the Nucleophile in the catalytic mechanism.

It belongs to the peptidase C56 family. HchA subfamily. As to quaternary structure, homodimer.

The protein localises to the cytoplasm. It catalyses the reaction N(omega)-(1-hydroxy-2-oxopropyl)-L-arginyl-[protein] + H2O = lactate + L-arginyl-[protein] + H(+). The enzyme catalyses N(6)-(1-hydroxy-2-oxopropyl)-L-lysyl-[protein] + H2O = lactate + L-lysyl-[protein] + H(+). The catalysed reaction is S-(1-hydroxy-2-oxopropyl)-L-cysteinyl-[protein] + H2O = lactate + L-cysteinyl-[protein] + H(+). It carries out the reaction N(omega)-(1-hydroxy-2-oxoethyl)-L-arginyl-[protein] + H2O = L-arginyl-[protein] + glycolate + H(+). It catalyses the reaction N(6)-(1-hydroxy-2-oxoethyl)-L-lysyl-[protein] + H2O = glycolate + L-lysyl-[protein] + H(+). The enzyme catalyses S-(1-hydroxy-2-oxoethyl)-L-cysteinyl-[protein] + H2O = glycolate + L-cysteinyl-[protein] + H(+). The catalysed reaction is N(2)-(1-hydroxy-2-oxopropyl)-dGTP + H2O = lactate + dGTP + H(+). It carries out the reaction N(2)-(1-hydroxy-2-oxopropyl)-GTP + H2O = lactate + GTP + H(+). It catalyses the reaction N(2)-(1-hydroxy-2-oxopropyl)-GDP + H2O = lactate + GDP + H(+). The enzyme catalyses N(2)-(1-hydroxy-2-oxopropyl)-GMP + H2O = lactate + GMP + H(+). The catalysed reaction is N(2)-(1-hydroxy-2-oxoethyl)-dGTP + H2O = dGTP + glycolate + H(+). It carries out the reaction N(2)-(1-hydroxy-2-oxoethyl)-GTP + H2O = glycolate + GTP + H(+). It catalyses the reaction N(2)-(1-hydroxy-2-oxoethyl)-GDP + H2O = glycolate + GDP + H(+). The enzyme catalyses N(2)-(1-hydroxy-2-oxoethyl)-GMP + H2O = glycolate + GMP + H(+). The catalysed reaction is an N(2)-(1-hydroxy-2-oxopropyl)-guanosine in RNA + H2O = a guanosine in RNA + lactate + H(+). It carries out the reaction an N(2)-(1-hydroxy-2-oxopropyl)-2'-deoxyguanosine in DNA + H2O = a 2'-deoxyguanosine in DNA + lactate + H(+). It catalyses the reaction an N(2)-(1-hydroxy-2-oxoethyl)-guanosine in RNA + H2O = a guanosine in RNA + glycolate + H(+). The enzyme catalyses an N(2)-(1-hydroxy-2-oxoethyl)-2'-deoxyguanosine in DNA + H2O = a 2'-deoxyguanosine in DNA + glycolate + H(+). Functionally, protein and nucleotide deglycase that catalyzes the deglycation of the Maillard adducts formed between amino groups of proteins or nucleotides and reactive carbonyl groups of glyoxals. Thus, functions as a protein deglycase that repairs methylglyoxal- and glyoxal-glycated proteins, and releases repaired proteins and lactate or glycolate, respectively. Deglycates cysteine, arginine and lysine residues in proteins, and thus reactivates these proteins by reversing glycation by glyoxals. Acts on early glycation intermediates (hemithioacetals and aminocarbinols), preventing the formation of Schiff bases and advanced glycation endproducts (AGE). Also functions as a nucleotide deglycase able to repair glycated guanine in the free nucleotide pool (GTP, GDP, GMP, dGTP) and in DNA and RNA. Is thus involved in a major nucleotide repair system named guanine glycation repair (GG repair), dedicated to reversing methylglyoxal and glyoxal damage via nucleotide sanitization and direct nucleic acid repair. Plays an important role in protecting cells from carbonyl stress. This is Protein/nucleic acid deglycase HchA from Escherichia coli O7:K1 (strain IAI39 / ExPEC).